A 441-amino-acid polypeptide reads, in one-letter code: Xylose isomerase 1 (441 aa).

Active-site residues include H105 and D108. Residues E236, E272, H275, D300, D311, D313, and D343 each contribute to the Mg(2+) site.

This sequence belongs to the xylose isomerase family. In terms of assembly, homotetramer. Mg(2+) serves as cofactor.

Its subcellular location is the cytoplasm. The catalysed reaction is alpha-D-xylose = alpha-D-xylulofuranose. The polypeptide is Xylose isomerase 1 (xylA1) (Xanthomonas axonopodis pv. citri (strain 306)).